Reading from the N-terminus, the 426-residue chain is Enolase (426 aa).

Gln163 contacts (2R)-2-phosphoglycerate. The active-site Proton donor is the Glu205. Mg(2+) contacts are provided by Asp242, Glu283, and Asp310. (2R)-2-phosphoglycerate is bound by residues Lys335, Arg364, Ser365, and Lys386. The active-site Proton acceptor is Lys335.

This sequence belongs to the enolase family. Mg(2+) serves as cofactor.

The protein localises to the cytoplasm. It localises to the secreted. It is found in the cell surface. The enzyme catalyses (2R)-2-phosphoglycerate = phosphoenolpyruvate + H2O. It functions in the pathway carbohydrate degradation; glycolysis; pyruvate from D-glyceraldehyde 3-phosphate: step 4/5. In terms of biological role, catalyzes the reversible conversion of 2-phosphoglycerate (2-PG) into phosphoenolpyruvate (PEP). It is essential for the degradation of carbohydrates via glycolysis. The protein is Enolase of Clavibacter michiganensis subsp. michiganensis (strain NCPPB 382).